A 173-amino-acid chain; its full sequence is Photosystem I assembly protein Ycf3 (173 aa).

TPR repeat units follow at residues 35–68 (AYIY…EENK), 72–105 (GETL…NPKQ), and 120–153 (GRFA…YPGG).

It belongs to the Ycf3 family.

It localises to the cellular thylakoid membrane. Functionally, essential for the assembly of the photosystem I (PSI) complex. May act as a chaperone-like factor to guide the assembly of the PSI subunits. The protein is Photosystem I assembly protein Ycf3 of Prochlorococcus marinus subsp. pastoris (strain CCMP1986 / NIES-2087 / MED4).